An 88-amino-acid chain; its full sequence is HssA/B-like protein 13 (88 aa).

Belongs to the hssA/B family.

This is HssA/B-like protein 13 (hssl13) from Dictyostelium discoideum (Social amoeba).